The primary structure comprises 156 residues: 6,7-dimethyl-8-ribityllumazine synthase (156 aa).

5-amino-6-(D-ribitylamino)uracil-binding positions include Phe22, 57–59, and 81–83; these read AYE and TVI. 86-87 contacts (2S)-2-hydroxy-3-oxobutyl phosphate; the sequence is GT. His89 functions as the Proton donor in the catalytic mechanism. Phe114 contributes to the 5-amino-6-(D-ribitylamino)uracil binding site. Arg128 serves as a coordination point for (2S)-2-hydroxy-3-oxobutyl phosphate.

It belongs to the DMRL synthase family. In terms of assembly, forms an icosahedral capsid composed of 60 subunits, arranged as a dodecamer of pentamers.

It catalyses the reaction (2S)-2-hydroxy-3-oxobutyl phosphate + 5-amino-6-(D-ribitylamino)uracil = 6,7-dimethyl-8-(1-D-ribityl)lumazine + phosphate + 2 H2O + H(+). It functions in the pathway cofactor biosynthesis; riboflavin biosynthesis; riboflavin from 2-hydroxy-3-oxobutyl phosphate and 5-amino-6-(D-ribitylamino)uracil: step 1/2. Catalyzes the formation of 6,7-dimethyl-8-ribityllumazine by condensation of 5-amino-6-(D-ribitylamino)uracil with 3,4-dihydroxy-2-butanone 4-phosphate. This is the penultimate step in the biosynthesis of riboflavin. The polypeptide is 6,7-dimethyl-8-ribityllumazine synthase (Mannheimia succiniciproducens (strain KCTC 0769BP / MBEL55E)).